Reading from the N-terminus, the 227-residue chain is Staphylococcal superantigen-like 10 (227 aa).

The signal sequence occupies residues 1–30 (MKFTALAKATLALGILTTGTLTTEVHSGHA).

This sequence belongs to the staphylococcal/streptococcal toxin family. In terms of assembly, interacts with prothrombin/F2 and coagulation factor X/F12. Interacts with human CXCR4.

It localises to the secreted. Functionally, plays a role in the inhibition of host complement activation via the classical pathway by interacting with the Fc region of human IgG and thereby interfering with the IgG/C1q interaction. Also inhibits the penultimate step of plasma clotting by interacting with prothrombin/F2 and coagulation factor X/F12. Does not affect the protease activity of thrombin but interferes with the conversion of prothrombin to thrombin. Interacts with human receptor CXCR4 and specifically inhibits CXCL12-induced calcium mobilization and cell migration. This Staphylococcus aureus (strain NCTC 8325 / PS 47) protein is Staphylococcal superantigen-like 10.